The sequence spans 892 residues: Alpha-actinin-1 (892 aa).

The residue at position 1 (methionine 1) is an N-acetylmethionine. The segment at 1-247 (MDHYDSQQTN…IMTYVSSFYH (247 aa)) is actin-binding. Serine 6 carries the post-translational modification Phosphoserine. Position 12 is a phosphotyrosine; by FAK1 (tyrosine 12). Calponin-homology (CH) domains follow at residues 31–135 (KQQR…LRFA) and 144–250 (TSAK…HAFS). Lysine 95 and lysine 195 each carry N6-acetyllysine. 4 Spectrin repeats span residues 274 to 384 (QLME…WLLN), 394 to 499 (HLAE…ALER), 509 to 620 (QLYL…ALTE), and 630 to 733 (RLRK…EVEN). The interaction with DDN stretch occupies residues 274-733 (QLMEDYEKLA…IARTINEVEN (460 aa)). Serine 471 bears the Phosphoserine mark. Lysine 676 carries the N6-acetyllysine modification. At serine 677 the chain carries Phosphoserine. 2 consecutive EF-hand domains span residues 746–781 (EQMNEFRASFNHFDRDHSGTLGPEEFKACLISLGYD) and 787–822 (QGEAEFARIMSIVDPNRLGVVTFQAFIDFMSRETAD). Ca(2+) is bound by residues aspartate 759, aspartate 761, serine 763, threonine 765, and glutamate 770. Serine 890 bears the Phosphoserine mark.

Belongs to the alpha-actinin family. As to quaternary structure, homodimer; antiparallel. Interacts with MYOZ2, TTID and LPP. Interacts with DDN. Interacts with PSD. Interacts with MICALL2. Interacts with DNM2 and CTTN. Interacts with PDLIM1. Interacts with PDLIM2. Interacts with PDLIM4 (via PDZ domain). Interacts with IGSF8.

It localises to the cytoplasm. Its subcellular location is the cytoskeleton. The protein resides in the myofibril. The protein localises to the sarcomere. It is found in the z line. It localises to the cell membrane. Its subcellular location is the cell junction. The protein resides in the cell projection. The protein localises to the ruffle. Its function is as follows. F-actin cross-linking protein which is thought to anchor actin to a variety of intracellular structures. Association with IGSF8 regulates the immune synapse formation and is required for efficient T-cell activation. This is Alpha-actinin-1 (Actn1) from Rattus norvegicus (Rat).